The primary structure comprises 65 residues: Alpha-toxin BeM10 (65 aa).

Residues 2–65 form the LCN-type CS-alpha/beta domain; the sequence is RDGYIADDKD…IKQKVSGKCN (64 aa). Intrachain disulfides connect Cys12/Cys64, Cys16/Cys35, Cys22/Cys45, and Cys26/Cys47.

This sequence belongs to the long (4 C-C) scorpion toxin superfamily. Sodium channel inhibitor family. Alpha subfamily. As to expression, expressed by the venom gland.

The protein localises to the secreted. Functionally, alpha toxins bind voltage-independently at site-3 of sodium channels (Nav) and inhibit the inactivation of the activated channels, thereby blocking neuronal transmission. Has paralytic activity in mice. The polypeptide is Alpha-toxin BeM10 (Mesobuthus eupeus (Lesser Asian scorpion)).